The primary structure comprises 307 residues: Sporulation sigma-E factor-processing peptidase (307 aa).

Transmembrane regions (helical) follow at residues 7–27 (LIWM…AVVL), 36–56 (LLLG…PFSH), 57–77 (LMVH…MTFG), 89–109 (LTFY…HFLF), and 127–147 (FGDP…SYFS). The active site involves Asp183.

Belongs to the peptidase U4 family. Self-associates. Interacts with SigE. Interacts with SpoIIR.

The protein localises to the cell membrane. Functionally, probable aspartic protease that is responsible for the proteolytic cleavage of the RNA polymerase sigma E factor (SigE/spoIIGB) to yield the active peptide in the mother cell during sporulation. Responds to a signal from the forespore that is triggered by the extracellular signal protein SpoIIR. The protein is Sporulation sigma-E factor-processing peptidase of Priestia megaterium (strain ATCC 12872 / QMB1551) (Bacillus megaterium).